Reading from the N-terminus, the 366-residue chain is MASVTEQFNDIISLYSTKLEHTSLRQDSPEYQGLLLSTIKKLLNLKTAIFDRLALFSTNETIDDVSTASIKFLAVDYYLGLLISRRQSNDSDVAQRQSMKLIYLKKSVESFINFLTLLQDYKLLDPLVGEKLGNFKDRYNPQLSELYAQPKNNKDLSGAQLKRKEKIELFQRNKEISTKLHCLELELKNNDEDHDHDELLRELYLMRLHHFSLDTINNIEQNLFECEMLSNFLKNSVHEVKSSGTQIRKESNDDDSTGFTDKLENINKPLIDKKGQVLRNFTLVDKRQQLQQKVRGYGQYGPTMSVEEFLDKEFEEGRVLQGGEEPEQAPDEENMDWQDRETYKAREWDEFKESHAKGSGNTMNRG.

A disordered region spans residues 318 to 366 (RVLQGGEEPEQAPDEENMDWQDRETYKAREWDEFKESHAKGSGNTMNRG). Acidic residues predominate over residues 324-336 (EEPEQAPDEENMD). Residues 337 to 356 (WQDRETYKAREWDEFKESHA) show a composition bias toward basic and acidic residues.

Belongs to the IGBP1/TAP42 family. Associates with the PP2a (PPH21 and PPH22) and SIT4 protein phosphatase catalytic subunits. Interacts with PPG1, PPH3 and TIP41. In terms of processing, phosphorylated by TOR kinases. Dephosphorylated by CDC55, TPD3 and SIT4.

In terms of biological role, involved in negative regulation of the TOR signaling pathway in response to type of available nitrogen source. Inhibitor of PP2A phosphatase SIT4, which results in inhibition of nuclear export of MSN2, due to lack of dephosphorylation by SIT4. Also required for rapamycin induced activation of expression of many nitrogen discrimination pathway (NDP) genes. In complex with PPH21, required for organization of the actin cytoskeletom during the cell cycle via a Rho GTPase-dependent mechanism. The polypeptide is Type 2A phosphatase-associated protein 42 (TAP42) (Saccharomyces cerevisiae (strain ATCC 204508 / S288c) (Baker's yeast)).